Consider the following 203-residue polypeptide: MLRNTIALRSFIRTQSTRPYPVNVEAVYYAPLKLPIKYGDLVADIQLRSYDNENLDFYSDFILRTGYYLGIPLTGPKPLPTRRERWTVIKSPFVHAKSKENFERHTHKRLIRAWDTNPEVLQMLIAYITKHSMAGVGMKCNFFQRSEISLDLGSDANGLEKSLSNIDELYSLRNDDKAQTSAVGQKVLELLDSPDFKKHLEKK.

Residues 1 to 14 (MLRNTIALRSFIRT) constitute a mitochondrion transit peptide. Serine 193 carries the post-translational modification Phosphoserine.

It belongs to the universal ribosomal protein uS10 family. In terms of assembly, component of the mitochondrial small ribosomal subunit (mt-SSU). Mature yeast 74S mitochondrial ribosomes consist of a small (37S) and a large (54S) subunit. The 37S small subunit contains a 15S ribosomal RNA (15S mt-rRNA) and 34 different proteins. The 54S large subunit contains a 21S rRNA (21S mt-rRNA) and 46 different proteins.

It localises to the mitochondrion. Component of the mitochondrial ribosome (mitoribosome), a dedicated translation machinery responsible for the synthesis of mitochondrial genome-encoded proteins, including at least some of the essential transmembrane subunits of the mitochondrial respiratory chain. The mitoribosomes are attached to the mitochondrial inner membrane and translation products are cotranslationally integrated into the membrane. This Saccharomyces cerevisiae (strain ATCC 204508 / S288c) (Baker's yeast) protein is Small ribosomal subunit protein uS10m (RSM10).